A 436-amino-acid chain; its full sequence is GTPase Der (436 aa).

EngA-type G domains lie at 4–167 and 176–351; these read PTIA…PEQQ and IKFS…ENHR. Residues 10 to 17, 57 to 61, 119 to 122, 182 to 189, 229 to 233, and 294 to 297 each bind GTP; these read GRANVGKS, DTGGI, NKID, GRPNVGKS, DTAGM, and NKWD. The region spanning 352-436 is the KH-like domain; the sequence is KRVQSSTLNE…PLHLIARKRN (85 aa).

This sequence belongs to the TRAFAC class TrmE-Era-EngA-EngB-Septin-like GTPase superfamily. EngA (Der) GTPase family. As to quaternary structure, associates with the 50S ribosomal subunit.

Functionally, GTPase that plays an essential role in the late steps of ribosome biogenesis. The chain is GTPase Der from Macrococcus caseolyticus (strain JCSC5402) (Macrococcoides caseolyticum).